The following is a 178-amino-acid chain: Thymidine kinase (178 aa).

13-20 is a binding site for ATP; it reads GPMFAGKS. Catalysis depends on Glu85, which acts as the Proton acceptor. Phe115 lines the substrate pocket. 2 residues coordinate Zn(2+): Cys140 and Cys143. 159 to 163 serves as a coordination point for substrate; it reads IEIIG. Residues Cys172 and Cys175 each coordinate Zn(2+).

It belongs to the thymidine kinase family.

The enzyme catalyses thymidine + ATP = dTMP + ADP + H(+). This is Thymidine kinase (TK) from Myxoma virus (strain Lausanne) (MYXV).